Consider the following 520-residue polypeptide: ATP synthase subunit alpha 2 (520 aa).

176-183 contributes to the ATP binding site; it reads GDRQTGKT.

It belongs to the ATPase alpha/beta chains family. In terms of assembly, F-type ATPases have 2 components, CF(1) - the catalytic core - and CF(0) - the membrane proton channel. CF(1) has five subunits: alpha(3), beta(3), gamma(1), delta(1), epsilon(1). CF(0) has three main subunits: a(1), b(2) and c(9-12). The alpha and beta chains form an alternating ring which encloses part of the gamma chain. CF(1) is attached to CF(0) by a central stalk formed by the gamma and epsilon chains, while a peripheral stalk is formed by the delta and b chains.

It is found in the cell inner membrane. It carries out the reaction ATP + H2O + 4 H(+)(in) = ADP + phosphate + 5 H(+)(out). In terms of biological role, produces ATP from ADP in the presence of a proton gradient across the membrane. The alpha chain is a regulatory subunit. This is ATP synthase subunit alpha 2 from Polaromonas naphthalenivorans (strain CJ2).